We begin with the raw amino-acid sequence, 586 residues long: ATPase family AAA domain-containing protein 3A (586 aa).

2 disordered regions span residues 1 to 55 (MSWL…PTGL) and 111 to 134 (QAEERRKTLSEETRQHQARAQYQD). Position 2 is an N-acetylserine (Ser-2). Residues 2–50 (SWLFGINKGPKGEGAGPPPPLPPAQPGAEGGGDRGLGDRPAPKDKWSNF) are required for interaction with the inner surface of the mitochondrial outer membrane. At 2-246 (SWLFGINKGP…FRAFVTDWDK (245 aa)) the chain is on the mitochondrial intermembrane side. Positions 17–26 (GPPPPLPPAQ) are enriched in pro residues. Composition is skewed to basic and acidic residues over residues 32–48 (GGDRGLGDRPAPKDKWS) and 111–125 (QAEERRKTLSEETRQ). Residues 86 to 219 (QLEQQSKLKE…QIRLKAAEHR (134 aa)) are a coiled coil. A helical transmembrane segment spans residues 247 to 264 (VTATVAGLTLLAVGVYSA). Residues 265 to 586 (KNATLVAGRF…PGRGDEPSPS (322 aa)) lie on the Mitochondrial matrix side of the membrane. Residues 290–305 (RITVLEALRHPIQVSR) form an S100B-binding region. At Ser-321 the chain carries Phosphoserine. 352–359 (GPPGTGKT) is a binding site for ATP. At Lys-491 the chain carries N6-acetyllysine.

This sequence belongs to the AAA ATPase family. As to quaternary structure, can form homooligomers. Homodimer formation at the N-terminus may be regulated by ATP and is required for the interaction with the inner surface of the mitochondrial outer membrane and correct mitochondrial homeostasis. Interacts with components of the mitochondrial ribosome and with other proteins involved in mitochondrial RNA metabolism. May also interact with protein involved in lipid metabolism, including STARD9. May interact with FAM210A. Interacts with GADD45GIP1. Interacts with S100B in a Ca(+2)- and Zn(+2)-dependent manner; this interaction probably occurs in the cytosol prior to mitochondrial targeting. S100B could assist ATAD3A cytoplasmic processing, preventing aggregation and favoring mitochondrial localization. Interacts with HSP60/HSPD1. Forms heterooligomers with ATAD3B; this interaction may affect ATAD3A activity. Interacts with CLPB. Interacts with EIF2AK3/PERK; ATAD3A and EIF2S1/eIF-2-alpha occupy a common binding site within the cytoplasmic loop of EIF2AK3/PERK, leading to prevent EIF2AK3/PERK association with its substrate EIF2S1/eIF-2-alpha. In terms of tissue distribution, overexpressed in lung adenocarcinomas (at protein level).

The protein localises to the mitochondrion inner membrane. It localises to the mitochondrion matrix. The protein resides in the mitochondrion nucleoid. The catalysed reaction is ATP + H2O = ADP + phosphate + H(+). Functionally, essential for mitochondrial network organization, mitochondrial metabolism and cell growth at organism and cellular level. May play an important role in mitochondrial protein synthesis. May also participate in mitochondrial DNA replication. May bind to mitochondrial DNA D-loops and contribute to nucleoid stability. Required for enhanced channeling of cholesterol for hormone-dependent steroidogenesis. Involved in mitochondrial-mediated antiviral innate immunity. Required to protect mitochondria from the PERK-mediated unfolded protein response: specifically inhibits the activity of EIF2AK3/PERK at mitochondria-endoplasmic reticulum contact sites, thereby providing a safe haven for mitochondrial protein translation during endoplasmic reticulum stress. Ability to inhibit EIF2AK3/PERK is independent of its ATPase activity. Also involved in the mitochondrial DNA damage response by promoting signaling between damaged genomes and the mitochondrial membrane, leading to activation of the integrated stress response (ISR). The chain is ATPase family AAA domain-containing protein 3A from Homo sapiens (Human).